Here is a 338-residue protein sequence, read N- to C-terminus: DNA-directed RNA polymerase subunit alpha (338 aa).

Polar residues predominate over residues 1-10; sequence MIQKNWQTLE. A disordered region spans residues 1–24; that stretch reads MIQKNWQTLEKPSKLDITPGSDPK. The interval 1 to 234 is alpha N-terminal domain (alpha-NTD); that stretch reads MIQKNWQTLE…DQLQMFINFE (234 aa). The interval 250 to 338 is alpha C-terminal domain (alpha-CTD); that stretch reads FNKNLLRKVD…DLAKRLEEPY (89 aa).

It belongs to the RNA polymerase alpha chain family. As to quaternary structure, homodimer. The RNAP catalytic core consists of 2 alpha, 1 beta, 1 beta' and 1 omega subunit. When a sigma factor is associated with the core the holoenzyme is formed, which can initiate transcription.

It catalyses the reaction RNA(n) + a ribonucleoside 5'-triphosphate = RNA(n+1) + diphosphate. Functionally, DNA-dependent RNA polymerase catalyzes the transcription of DNA into RNA using the four ribonucleoside triphosphates as substrates. In Rhodospirillum centenum (strain ATCC 51521 / SW), this protein is DNA-directed RNA polymerase subunit alpha.